The following is an 80-amino-acid chain: Inner kinetochore subunit MHF2 (80 aa).

Belongs to the CENP-X/MHF2 family. The MHF histone-fold complex is a heterotetramer of 2 MHF1-MHF2 heterodimers. Together with MPH1/FANCM, forms the FANCM-MHF complex. Component of the inner kinetochore constitutive centromere-associated network (CCAN) (also known as central kinetochore CTF19 complex in yeast), which is composed of at least AME1, CHL4, CNN1, CTF3, CTF19, IML3, MCM16, MCM21, MCM22, MHF1, MHF2, MIF2, NKP1, NKP2, OKP1 and WIP1.

Its function is as follows. DNA-binding component of a FANCM-MHF complex involved in DNA damage repair and genome maintenance. FANCM-MHF promotes gene conversion at blocked replication forks, probably by reversal of the stalled fork. Component of the kinetochore, a multiprotein complex that assembles on centromeric DNA and attaches chromosomes to spindle microtubules, mediating chromosome segregation and sister chromatid segregation during meiosis and mitosis. Component of the inner kinetochore constitutive centromere-associated network (CCAN), which serves as a structural platform for outer kinetochore assembly. This chain is Inner kinetochore subunit MHF2, found in Saccharomyces cerevisiae (strain ATCC 204508 / S288c) (Baker's yeast).